A 186-amino-acid chain; its full sequence is C-type lectin 37Da (186 aa).

The signal sequence occupies residues Met-1–Gly-20. 2 N-linked (GlcNAc...) asparagine glycosylation sites follow: Asn-35 and Asn-47. Positions Ile-46–Lys-169 constitute a C-type lectin domain. A disulfide bond links Cys-140 and Cys-160.

It is found in the secreted. Functionally, galactose-specific lectin that displays calcium-dependent activity. Binds to the surface of hemocytes and enhances hemocyte encapsulation and melanization. This is likely by interacting with carbohydrates on the surface of the hemocytes. Also displays agglutination activity against the Gram-negative bacterium E.coli. This Drosophila melanogaster (Fruit fly) protein is C-type lectin 37Da.